The chain runs to 213 residues: Orotate phosphoribosyltransferase (213 aa).

Lys-26 is a 5-phospho-alpha-D-ribose 1-diphosphate binding site. 34–35 (FF) is an orotate binding site. 5-phospho-alpha-D-ribose 1-diphosphate-binding positions include 72–73 (YK), Arg-99, Lys-100, Lys-103, His-105, and 124–132 (DDVITAGTA). Orotate is bound by residues Thr-128 and Arg-156.

It belongs to the purine/pyrimidine phosphoribosyltransferase family. PyrE subfamily. In terms of assembly, homodimer. The cofactor is Mg(2+).

It carries out the reaction orotidine 5'-phosphate + diphosphate = orotate + 5-phospho-alpha-D-ribose 1-diphosphate. The protein operates within pyrimidine metabolism; UMP biosynthesis via de novo pathway; UMP from orotate: step 1/2. Catalyzes the transfer of a ribosyl phosphate group from 5-phosphoribose 1-diphosphate to orotate, leading to the formation of orotidine monophosphate (OMP). In Salmonella arizonae (strain ATCC BAA-731 / CDC346-86 / RSK2980), this protein is Orotate phosphoribosyltransferase.